Reading from the N-terminus, the 206-residue chain is Large ribosomal subunit protein uL4 (206 aa).

The segment at 45–76 is disordered; sequence RQGTQSAKTRTEVSGGGIKPWRQKGTGRARQG.

The protein belongs to the universal ribosomal protein uL4 family. Part of the 50S ribosomal subunit.

In terms of biological role, one of the primary rRNA binding proteins, this protein initially binds near the 5'-end of the 23S rRNA. It is important during the early stages of 50S assembly. It makes multiple contacts with different domains of the 23S rRNA in the assembled 50S subunit and ribosome. Forms part of the polypeptide exit tunnel. The sequence is that of Large ribosomal subunit protein uL4 from Clostridium acetobutylicum (strain ATCC 824 / DSM 792 / JCM 1419 / IAM 19013 / LMG 5710 / NBRC 13948 / NRRL B-527 / VKM B-1787 / 2291 / W).